The chain runs to 201 residues: Probable molybdenum cofactor guanylyltransferase (201 aa).

Residues 16–18 (LAG), Lys28, Asp75, and Asp107 contribute to the GTP site. Asp107 lines the Mg(2+) pocket.

It belongs to the MobA family. It depends on Mg(2+) as a cofactor.

It is found in the cytoplasm. It catalyses the reaction Mo-molybdopterin + GTP + H(+) = Mo-molybdopterin guanine dinucleotide + diphosphate. Its function is as follows. Transfers a GMP moiety from GTP to Mo-molybdopterin (Mo-MPT) cofactor (Moco or molybdenum cofactor) to form Mo-molybdopterin guanine dinucleotide (Mo-MGD) cofactor. The polypeptide is Probable molybdenum cofactor guanylyltransferase (Mycobacterium marinum (strain ATCC BAA-535 / M)).